The primary structure comprises 378 residues: D-galactarolactone cycloisomerase (378 aa).

Residues D194, E220, and E246 each coordinate Mg(2+). H296 (proton acceptor) is an active-site residue.

Belongs to the mandelate racemase/muconate lactonizing enzyme family. As to quaternary structure, homooctamer. Mg(2+) is required as a cofactor.

The enzyme catalyses D-glucaro-1,4-lactone = 5-dehydro-4-deoxy-D-glucarate + H(+). The catalysed reaction is D-galactaro-1,4-lactone = 5-dehydro-4-deoxy-D-glucarate + H(+). Its pathway is carbohydrate acid metabolism; D-galacturonate degradation via prokaryotic oxidative pathway. In terms of biological role, catalyzes the ring opening of D-galactaro-1,4-lactone to yield 5-keto-4-deoxy-D-glucarate (KDG) via a beta-elimination reaction. This is a step in the oxidative degradation pathway of D-galacturonate, which allows A.tumefaciens to utilize D-galacturonate as a sole carbon source. To a lesser extent, can also use D-glucaro-1,4-lactone as substrate to produce KDG, but cannot use D-galactaro-1,5-lactone, D-glucaro-6,3-lactone and linear D-glucarate. The sequence is that of D-galactarolactone cycloisomerase (gci) from Agrobacterium fabrum (strain C58 / ATCC 33970) (Agrobacterium tumefaciens (strain C58)).